The sequence spans 343 residues: Anthranilate phosphoribosyltransferase (343 aa).

Residues Gly77, Gly80–Asp81, Thr85, Asn87–Thr90, Lys105–Gly113, and Ser117 each bind 5-phospho-alpha-D-ribose 1-diphosphate. Gly77 contacts anthranilate. Ser89 contributes to the Mg(2+) binding site. Asn108 contacts anthranilate. Arg163 provides a ligand contact to anthranilate. Mg(2+) is bound by residues Asp222 and Glu223.

This sequence belongs to the anthranilate phosphoribosyltransferase family. In terms of assembly, homodimer. Requires Mg(2+) as cofactor.

It catalyses the reaction N-(5-phospho-beta-D-ribosyl)anthranilate + diphosphate = 5-phospho-alpha-D-ribose 1-diphosphate + anthranilate. The protein operates within amino-acid biosynthesis; L-tryptophan biosynthesis; L-tryptophan from chorismate: step 2/5. Its function is as follows. Catalyzes the transfer of the phosphoribosyl group of 5-phosphorylribose-1-pyrophosphate (PRPP) to anthranilate to yield N-(5'-phosphoribosyl)-anthranilate (PRA). The protein is Anthranilate phosphoribosyltransferase of Cenarchaeum symbiosum (strain A).